A 612-amino-acid chain; its full sequence is Heparan-sulfate 6-O-sulfotransferase 2 (612 aa).

Over 1-4 the chain is Cytoplasmic; that stretch reads MALP. Residues 5 to 27 traverse the membrane as a helical; Signal-anchor for type II membrane protein segment; sequence AFAARALGPPLQPEQGAPARTTC. The tract at residues 9 to 52 is disordered; it reads RALGPPLQPEQGAPARTTCPRRHSRVEAELAASRPGSVAASVRA. The Lumenal portion of the chain corresponds to 28 to 612; sequence PRRHSRVEAE…DYIGSVETWR (585 aa). Asn-209 carries an N-linked (GlcNAc...) asparagine glycan. A 3'-phosphoadenylyl sulfate-binding site is contributed by 233 to 241; sequence HIQKTGGTT. Residues 263-264, Arg-280, Trp-285, and His-290 each bind substrate; that span reads KK. Catalysis depends on His-290, which acts as the Proton acceptor. Residues Arg-325 and Ser-333 each coordinate 3'-phosphoadenylyl sulfate. Substrate is bound by residues His-337 and Trp-344. Asn-404 carries an N-linked (GlcNAc...) asparagine glycan. 3'-phosphoadenylyl sulfate is bound at residue 457–459; that stretch reads TQY. N-linked (GlcNAc...) asparagine glycosylation occurs at Asn-460. Residue 463-464 coordinates 3'-phosphoadenylyl sulfate; that stretch reads RA. The interval 529 to 612 is disordered; that stretch reads HFQSQSQGQS…DYIGSVETWR (84 aa). Residues 531 to 564 are compositionally biased toward low complexity; that stretch reads QSQSQGQSQSQSPGQNLSQNPNPNPNQNLTQNLS. N-linked (GlcNAc...) asparagine glycans are attached at residues Asn-546, Asn-558, Asn-562, Asn-574, and Asn-599. Residues 565–577 are compositionally biased toward polar residues; the sequence is HNLTPSSNPNSTQ.

The protein belongs to the sulfotransferase 6 family.

Its subcellular location is the membrane. The enzyme catalyses alpha-D-glucosaminyl-[heparan sulfate](n) + 3'-phosphoadenylyl sulfate = 6-sulfo-alpha-D-glucosaminyl-[heparan sulfate](n) + adenosine 3',5'-bisphosphate + H(+). Functionally, 6-O-sulfation enzyme which catalyzes the transfer of sulfate from 3'-phosphoadenosine 5'-phosphosulfate (PAPS) to position 6 of the N-sulfoglucosamine residue (GlcNS) of heparan sulfate. The protein is Heparan-sulfate 6-O-sulfotransferase 2 (Hs6st2) of Mus musculus (Mouse).